The sequence spans 456 residues: RuvB-like helicase 1 (456 aa).

71–78 serves as a coordination point for ATP; sequence GGAGTGKT.

Belongs to the RuvB family. May form heterododecamers with RVB2. Component of the SWR1 chromatin remodeling complex, the INO80 chromatin remodeling complex, and of the R2TP complex.

It localises to the nucleus. The catalysed reaction is ATP + H2O = ADP + phosphate + H(+). DNA helicase which participates in several chromatin remodeling complexes, including the SWR1 and the INO80 complexes. The SWR1 complex mediates the ATP-dependent exchange of histone H2A for the H2A variant HZT1 leading to transcriptional regulation of selected genes by chromatin remodeling. The INO80 complex remodels chromatin by shifting nucleosomes and is involved in DNA repair. Also involved in pre-rRNA processing. The sequence is that of RuvB-like helicase 1 (rvb1) from Schizosaccharomyces pombe (strain 972 / ATCC 24843) (Fission yeast).